Reading from the N-terminus, the 383-residue chain is N-acetyldiaminopimelate deacetylase (383 aa).

D72 is a catalytic residue. Residue E131 is the Proton acceptor of the active site.

Belongs to the peptidase M20A family. N-acetyldiaminopimelate deacetylase subfamily.

It carries out the reaction N-acetyl-(2S,6S)-2,6-diaminopimelate + H2O = (2S,6S)-2,6-diaminopimelate + acetate. The protein operates within amino-acid biosynthesis; L-lysine biosynthesis via DAP pathway; LL-2,6-diaminopimelate from (S)-tetrahydrodipicolinate (acetylase route): step 3/3. In terms of biological role, catalyzes the conversion of N-acetyl-diaminopimelate to diaminopimelate and acetate. This is N-acetyldiaminopimelate deacetylase from Lacticaseibacillus casei (strain BL23) (Lactobacillus casei).